The following is a 422-amino-acid chain: MAFIALGINHKTASVAVRERVAFTPEQMVEALQQLCRLTTSREAAILSTCNRSELYLEIDHPTADDVLAWLADYHRLTLDELRACAYVHQDEDAVRHMMRVASGLDSMVLGEPQILGQMKSAYAVAREAGTVGPLLGRLFQATFSTAKTVRTDTAIGENPVSVAFAAVSLAKQIFSDLHRSQALLIGAGETITLVARHLFEQGVKRIVVANRTLERASLLAEQFGAHAVLLSEIPEELANSDIVISSTASQLPILGKGAVERALKQRKHKPMFMVDIAVPRDIEPEVGELDDVYLYSVDDLHEVVAENLKSRQGAAQAAEELVGSGVAEFMQRLRELAAVDVLRAYRQQAERLRDEELGKAQRQLANGADPAEVMAQLARGLTNKLLHAPSVQMKKMSAEGRIDALALAQELFALDEGAPRH.

Substrate contacts are provided by residues 49–52 (TCNR), S107, 112–114 (EPQ), and Q118. Catalysis depends on C50, which acts as the Nucleophile. An NADP(+)-binding site is contributed by 187-192 (GAGETI).

The protein belongs to the glutamyl-tRNA reductase family. As to quaternary structure, homodimer.

It catalyses the reaction (S)-4-amino-5-oxopentanoate + tRNA(Glu) + NADP(+) = L-glutamyl-tRNA(Glu) + NADPH + H(+). It participates in porphyrin-containing compound metabolism; protoporphyrin-IX biosynthesis; 5-aminolevulinate from L-glutamyl-tRNA(Glu): step 1/2. In terms of biological role, catalyzes the NADPH-dependent reduction of glutamyl-tRNA(Glu) to glutamate 1-semialdehyde (GSA). The polypeptide is Glutamyl-tRNA reductase (Pseudomonas aeruginosa (strain ATCC 15692 / DSM 22644 / CIP 104116 / JCM 14847 / LMG 12228 / 1C / PRS 101 / PAO1)).